The chain runs to 564 residues: Eukaryotic translation initiation factor 3 subunit L (564 aa).

At Ser-2 the chain carries N-acetylserine. Residues 331 to 537 enclose the PCI domain; that stretch reads DAIRVFANIL…IHIADTKVAR (207 aa). An N6-acetyllysine mark is found at Lys-465 and Lys-549.

It belongs to the eIF-3 subunit L family. As to quaternary structure, component of the eukaryotic translation initiation factor 3 (eIF-3) complex, which is composed of 13 subunits: EIF3A, EIF3B, EIF3C, EIF3D, EIF3E, EIF3F, EIF3G, EIF3H, EIF3I, EIF3J, EIF3K, EIF3L and EIF3M. The eIF-3 complex appears to include 3 stable modules: module A is composed of EIF3A, EIF3B, EIF3G and EIF3I; module B is composed of EIF3F, EIF3H, and EIF3M; and module C is composed of EIF3C, EIF3D, EIF3E, EIF3K and EIF3L. EIF3C of module C binds EIF3B of module A and EIF3H of module B, thereby linking the three modules. EIF3J is a labile subunit that binds to the eIF-3 complex via EIF3B. The eIF-3 complex may interact with RPS6KB1 under conditions of nutrient depletion. Mitogenic stimulation may lead to binding and activation of a complex composed of MTOR and RPTOR, leading to phosphorylation and release of RPS6KB1 and binding of EIF4B to eIF-3. Interacts with RRN3.

It localises to the cytoplasm. Its function is as follows. Component of the eukaryotic translation initiation factor 3 (eIF-3) complex, which is required for several steps in the initiation of protein synthesis. The eIF-3 complex associates with the 40S ribosome and facilitates the recruitment of eIF-1, eIF-1A, eIF-2:GTP:methionyl-tRNAi and eIF-5 to form the 43S pre-initiation complex (43S PIC). The eIF-3 complex stimulates mRNA recruitment to the 43S PIC and scanning of the mRNA for AUG recognition. The eIF-3 complex is also required for disassembly and recycling of post-termination ribosomal complexes and subsequently prevents premature joining of the 40S and 60S ribosomal subunits prior to initiation. The eIF-3 complex specifically targets and initiates translation of a subset of mRNAs involved in cell proliferation, including cell cycling, differentiation and apoptosis, and uses different modes of RNA stem-loop binding to exert either translational activation or repression. The polypeptide is Eukaryotic translation initiation factor 3 subunit L (Eif3l) (Mus musculus (Mouse)).